We begin with the raw amino-acid sequence, 512 residues long: Alpha-amylase (512 aa).

Positions 1–29 (MKQQKRLYARLLTLLFALIFLLPHSAAAA) are cleaved as a signal peptide. Residues Asn-133, Asp-190, Ala-210, Asp-212, Asp-223, Asp-229, Asp-231, and Asp-233 each contribute to the Ca(2+) site. Residue Asp-190 participates in Na(+) binding. Residues Asp-212, Asp-223, and Asp-229 each coordinate Na(+). Asp-260 functions as the Nucleophile in the catalytic mechanism. His-264 is a Ca(2+) binding site. Glu-290 serves as the catalytic Proton donor. Gly-329, Tyr-331, His-435, Asp-436, and Asp-459 together coordinate Ca(2+).

It belongs to the glycosyl hydrolase 13 family. Monomer. Requires Ca(2+) as cofactor. Na(+) is required as a cofactor.

It localises to the secreted. It catalyses the reaction Endohydrolysis of (1-&gt;4)-alpha-D-glucosidic linkages in polysaccharides containing three or more (1-&gt;4)-alpha-linked D-glucose units.. This chain is Alpha-amylase (amyS), found in Bacillus licheniformis.